A 950-amino-acid polypeptide reads, in one-letter code: Zinc finger CCCH domain-containing protein 3 (950 aa).

4 disordered regions span residues 32-106 (GNSS…HPEP), 127-182 (IKPP…TKVG), 201-220 (VVKS…RTVS), and 314-489 (SEKS…VLRK). Residues 56-74 (RPSRRGFSSHHGPSWRKKY) show a composition bias toward basic residues. Polar residues predominate over residues 76-96 (LVNQPVESSDPASDPAFQTSL). Polar residues predominate over residues 327 to 338 (PRTTLESGNKAT). The segment covering 344-360 (KTEKPQPKVDPEVRPEK) has biased composition (basic and acidic residues). Residues 370 to 388 (SPSKYKWKASSPSASSSSS) are compositionally biased toward low complexity. Over residues 402–412 (SQLSPVPSRPT) the composition is skewed to polar residues. A Phosphoserine modification is found at Ser-405. The span at 438–449 (VKSRTKIIRRRG) shows a compositional bias: basic residues. Residues 460–470 (SPTTATTSKNH) show a composition bias toward polar residues. C3H1-type zinc fingers lie at residues 662-690 (EKKR…HDPE), 694-717 (VCTR…HHVS), 718-744 (KEKM…HVYV), 745-772 (SRKA…HTLL), and 773-795 (CPDF…HRNQ). Positions 793-950 (RNQKRHGRRT…GKPLHIKPRL (158 aa)) are disordered. Positions 828 to 838 (PTTTQRSVRQM) are enriched in polar residues. A compositionally biased stretch (low complexity) spans 839 to 849 (SSGLASGAEAP). Phosphoserine occurs at positions 851 and 855. Residues 857-888 (RVLASTSTLSSKATAASSPSPSPSTSSPAPSL) show a composition bias toward low complexity. The span at 914–928 (SLHSSPSPGGQTETG) shows a compositional bias: polar residues. A phosphoserine mark is found at Ser-918, Ser-920, and Ser-934.

As to quaternary structure, interacts with SMAD1, SMAD3, SMAD4, CPSF2 and CPSF3.

The protein resides in the nucleus. In terms of biological role, required for the export of polyadenylated mRNAs from the nucleus. Enhances ACVR1B-induced SMAD-dependent transcription. Binds to single-stranded DNA but not to double-stranded DNA in vitro. Involved in RNA cleavage. The chain is Zinc finger CCCH domain-containing protein 3 (Zc3h3) from Mus musculus (Mouse).